Consider the following 238-residue polypeptide: Uridylate kinase (238 aa).

ATP is bound at residue 12–15 (KLSG). Gly-54 is a UMP binding site. ATP is bound by residues Gly-55 and Arg-59. UMP contacts are provided by residues Asp-74 and 135-142 (TGNPFFTT). Thr-162, Tyr-168, and Asp-171 together coordinate ATP.

The protein belongs to the UMP kinase family. In terms of assembly, homohexamer.

Its subcellular location is the cytoplasm. The enzyme catalyses UMP + ATP = UDP + ADP. Its pathway is pyrimidine metabolism; CTP biosynthesis via de novo pathway; UDP from UMP (UMPK route): step 1/1. Inhibited by UTP. In terms of biological role, catalyzes the reversible phosphorylation of UMP to UDP. This is Uridylate kinase from Janthinobacterium sp. (strain Marseille) (Minibacterium massiliensis).